Consider the following 258-residue polypeptide: D-beta-hydroxybutyrate dehydrogenase (258 aa).

8–32 contributes to the NAD(+) binding site; sequence LVTGSTSGIGLGIAKALAAQGANII. Serine 140 provides a ligand contact to substrate. The active-site Proton acceptor is the tyrosine 153.

It belongs to the short-chain dehydrogenases/reductases (SDR) family.

The enzyme catalyses (R)-3-hydroxybutanoate + NAD(+) = acetoacetate + NADH + H(+). This is D-beta-hydroxybutyrate dehydrogenase (hbdH1) from Cupriavidus necator (strain ATCC 17699 / DSM 428 / KCTC 22496 / NCIMB 10442 / H16 / Stanier 337) (Ralstonia eutropha).